The sequence spans 494 residues: Transcriptional regulator of yeast form adherence 3 (494 aa).

An SPX domain is found at 1–360 (MKFAKTLERT…SLGIQKTFPK (360 aa)). The RING-type zinc finger occupies 398–437 (CPICMNIAYKPIRLSCGHLFCVRCLVKMKQDDKTSCPLCR).

The protein localises to the nucleus. In terms of biological role, transcription factor required for yeast cell adherence to silicone substrate. The polypeptide is Transcriptional regulator of yeast form adherence 3 (TRY3) (Candida albicans (strain SC5314 / ATCC MYA-2876) (Yeast)).